Consider the following 258-residue polypeptide: Enterotoxin type D (258 aa).

The first 25 residues, 1–25 (MKKFNILIALLFFTSLVISPLNVKA), serve as a signal peptide directing secretion. Aspartate 212, histidine 248, histidine 250, and aspartate 252 together coordinate Zn(2+).

It belongs to the staphylococcal/streptococcal toxin family. Homodimer; zinc-dependent. Interacts with MHC class II molecules composed of alpha/HLA-DRA and beta/HLA-DRB1 chains. It depends on Zn(2+) as a cofactor.

The protein localises to the secreted. In terms of biological role, staphylococcal enterotoxin that activates the host immune system by binding as unprocessed molecules to major histocompatibility (MHC) complex class II and T-cell receptor (TCR) molecules. In turn, this ternary complex activates a large number of T-lymphocytes initiating a systemic release of pro-inflammatory cytokines. In addition, induces B-cell proliferation and differentiation in the presence of T-cells. Causes also the intoxication staphylococcal food poisoning syndrome. The chain is Enterotoxin type D (entD) from Staphylococcus aureus.